The following is a 331-amino-acid chain: UPF0284 protein PF0303 (331 aa).

Belongs to the UPF0284 family.

This chain is UPF0284 protein PF0303, found in Pyrococcus furiosus (strain ATCC 43587 / DSM 3638 / JCM 8422 / Vc1).